Reading from the N-terminus, the 147-residue chain is MKVILVKDVKNVGKAGEVVNVSDGYGRNYLIPKGLAIEATESNLKMLNEKKKAEERKRQQELEQAKELAQKLSKVGVTLKVKAGENGKLFGSVTSKDVEEALKEKGFEIDKKKIVLPENIKTTGTYYAEIKLYQGVTAKVQVDVVAE.

The protein belongs to the bacterial ribosomal protein bL9 family.

Its function is as follows. Binds to the 23S rRNA. The chain is Large ribosomal subunit protein bL9 from Caldanaerobacter subterraneus subsp. tengcongensis (strain DSM 15242 / JCM 11007 / NBRC 100824 / MB4) (Thermoanaerobacter tengcongensis).